We begin with the raw amino-acid sequence, 216 residues long: Hexitol phosphatase A (216 aa).

The active-site Nucleophile is the D9. D9 and D11 together coordinate a divalent metal cation. Residues 9-11 (DLD), 106-107 (TS), and K138 contribute to the substrate site. The active-site Proton donor is D11. D163 lines the a divalent metal cation pocket.

It belongs to the HAD-like hydrolase superfamily. CbbY/CbbZ/Gph/YieH family. It depends on Mg(2+) as a cofactor. The cofactor is Mn(2+). Requires Co(2+) as cofactor.

The catalysed reaction is sugar phosphate + H2O = sugar + phosphate.. It catalyses the reaction D-mannitol 1-phosphate + H2O = D-mannitol + phosphate. The enzyme catalyses D-sorbitol 6-phosphate + H2O = D-sorbitol + phosphate. Functionally, sugar-phosphate phosphohydrolase that appears to contribute to butanol tolerance. Catalyzes the dephosphorylation of D-mannitol 1-phosphate and D-sorbitol 6-phosphate. Is also able to dephosphorylate other sugar phosphates in vitro including ribose-5-phosphate (Rib5P), 2-deoxyribose-5-phosphate, fructose-1-phosphate (Fru1P), fructose-6-phosphate (Fru6P), and glucose-6-phosphate (Glu6P). Selectively hydrolyzes beta-D-glucose-1-phosphate (bGlu1P) and has no activity with the alpha form. In Escherichia coli (strain K12), this protein is Hexitol phosphatase A.